The sequence spans 196 residues: MSLQIDAVILAGGMARRMGGNDKGLVELQAQPMIKHAIDRIKPQVREILINANRNQTRYAEFGYQVISDEDSGYLGPLAGMITAMGQTQAKYLLVVPCDCPLLPADLVERMLSQLEKENADLAVASDGKREQPVVLLLKPELRDSMKAFLDAGERKIDFWYAKHNCAVADFSDQPNAFVNVNTPEQKQQLSEAIAK.

Residues 10-12 (LAG), lysine 23, asparagine 51, aspartate 69, and aspartate 99 each bind GTP. Aspartate 99 serves as a coordination point for Mg(2+).

It belongs to the MobA family. In terms of assembly, monomer. It depends on Mg(2+) as a cofactor.

The protein localises to the cytoplasm. It carries out the reaction Mo-molybdopterin + GTP + H(+) = Mo-molybdopterin guanine dinucleotide + diphosphate. In terms of biological role, transfers a GMP moiety from GTP to Mo-molybdopterin (Mo-MPT) cofactor (Moco or molybdenum cofactor) to form Mo-molybdopterin guanine dinucleotide (Mo-MGD) cofactor. The polypeptide is Molybdenum cofactor guanylyltransferase (Shewanella sediminis (strain HAW-EB3)).